We begin with the raw amino-acid sequence, 404 residues long: Argininosuccinate synthase (404 aa).

Residues 10–18 (AYSGGVDTS) and Ala-38 each bind ATP. Tyr-89 contacts L-citrulline. Gly-119 serves as a coordination point for ATP. L-aspartate-binding residues include Thr-121, Asn-125, and Asp-126. Position 125 (Asn-125) interacts with L-citrulline. L-citrulline is bound by residues Arg-129, Ser-177, Ser-186, Glu-262, and Tyr-274.

The protein belongs to the argininosuccinate synthase family. Type 1 subfamily. In terms of assembly, homotetramer.

It localises to the cytoplasm. It catalyses the reaction L-citrulline + L-aspartate + ATP = 2-(N(omega)-L-arginino)succinate + AMP + diphosphate + H(+). It functions in the pathway amino-acid biosynthesis; L-arginine biosynthesis; L-arginine from L-ornithine and carbamoyl phosphate: step 2/3. The chain is Argininosuccinate synthase from Prochlorococcus marinus (strain MIT 9312).